Reading from the N-terminus, the 126-residue chain is Regulatory protein MgsR (126 aa).

C13 and C16 form a disulfide bridge.

This sequence belongs to the ArsC family.

It localises to the cytoplasm. Activity is controlled at multiple levels. Regulation includes a positive autoregulatory loop on mgsR transcription and a post-translational redox-sensitive activation step by an intramolecular disulfide bond formation in response to ethanol stress. In addition, protein stability is strictly controlled by rapid proteolytic degradation by the ClpXP and ClpCP proteases. The McsB protein-arginine kinase might serve as a proteolytic adapter for the ClpX ATPase in the degradation mechanism of MgsR. Regulates transcription of a subregulon within the general stress response. Exerts positive and negative effects in response to ethanol stress. The polypeptide is Regulatory protein MgsR (Bacillus subtilis (strain 168)).